Here is a 301-residue protein sequence, read N- to C-terminus: tRNA pseudouridine synthase B (301 aa).

Catalysis depends on D38, which acts as the Nucleophile.

The protein belongs to the pseudouridine synthase TruB family. Type 1 subfamily.

The enzyme catalyses uridine(55) in tRNA = pseudouridine(55) in tRNA. Its function is as follows. Responsible for synthesis of pseudouridine from uracil-55 in the psi GC loop of transfer RNAs. This is tRNA pseudouridine synthase B from Clostridioides difficile (strain 630) (Peptoclostridium difficile).